The following is a 179-amino-acid chain: O-acetyl-ADP-ribose deacetylase (179 aa).

Positions M1–G175 constitute a Macro domain. Residues D11–I12, N25, G33–D35, and S122–Y126 contribute to the substrate site. The active-site Proton acceptor is the D35.

It belongs to the MacroD-type family. YmdB subfamily. In terms of assembly, homodimer. Interacts with RNase III.

The catalysed reaction is 3''-O-acetyl-ADP-D-ribose + H2O = ADP-D-ribose + acetate + H(+). The enzyme catalyses 2''-O-acetyl-ADP-D-ribose + H2O = ADP-D-ribose + acetate + H(+). Its function is as follows. Deacetylates O-acetyl-ADP ribose to yield ADP-ribose and free acetate. Down-regulates ribonuclease 3 (RNase III) activity. Acts by interacting directly with the region of the ribonuclease that is required for dimerization/activation. The polypeptide is O-acetyl-ADP-ribose deacetylase (Salmonella typhi).